The chain runs to 526 residues: Phosphoenolpyruvate carboxykinase (ATP) 2 (526 aa).

Positions 55, 190, and 196 each coordinate substrate. Residues lysine 196, histidine 215, and glycine 231–threonine 239 each bind ATP. Positions 196 and 215 each coordinate Mn(2+). Aspartate 252 is a binding site for Mn(2+). 3 residues coordinate ATP: glutamate 280, arginine 317, and threonine 442. Position 317 (arginine 317) interacts with substrate.

Belongs to the phosphoenolpyruvate carboxykinase (ATP) family. Requires Mn(2+) as cofactor.

Its subcellular location is the cytoplasm. The enzyme catalyses oxaloacetate + ATP = phosphoenolpyruvate + ADP + CO2. Its pathway is carbohydrate biosynthesis; gluconeogenesis. Its function is as follows. Involved in the gluconeogenesis. Catalyzes the conversion of oxaloacetate (OAA) to phosphoenolpyruvate (PEP) through direct phosphoryl transfer between the nucleoside triphosphate and OAA. In Moorella thermoacetica (strain ATCC 39073 / JCM 9320), this protein is Phosphoenolpyruvate carboxykinase (ATP) 2.